The following is a 766-amino-acid chain: Transcription factor GTE4 (766 aa).

Disordered regions lie at residues glycine 87–aspartate 108, arginine 234–glutamate 262, and glycine 388–glycine 412. The span at aspartate 238–alanine 250 shows a compositional bias: polar residues. Positions glycine 416 to isoleucine 522 constitute a Bromo domain. 2 disordered regions span residues threonine 544 to aspartate 606 and alanine 687 to threonine 766. The span at proline 574–glycine 589 shows a compositional bias: low complexity. The NET domain maps to proline 597–lysine 678. Over residues serine 736 to threonine 766 the composition is skewed to low complexity.

Ubiquitously expressed.

It is found in the nucleus. Its function is as follows. Involved in the activation and maintenance of cell division in the meristems and by this controls cell numbers in differentiated organs. Its action in cell cycle regulation may be directed through the RB-E2F pathway. The polypeptide is Transcription factor GTE4 (GTE4) (Arabidopsis thaliana (Mouse-ear cress)).